The chain runs to 210 residues: Uracil phosphoribosyltransferase (210 aa).

Residues Arg-78, Arg-103, and 130-138 each bind 5-phospho-alpha-D-ribose 1-diphosphate; that span reads DPMLATGGS. Uracil contacts are provided by residues Ile-193 and 198–200; that span reads GDA. A 5-phospho-alpha-D-ribose 1-diphosphate-binding site is contributed by Asp-199.

The protein belongs to the UPRTase family. The cofactor is Mg(2+).

The enzyme catalyses UMP + diphosphate = 5-phospho-alpha-D-ribose 1-diphosphate + uracil. It participates in pyrimidine metabolism; UMP biosynthesis via salvage pathway; UMP from uracil: step 1/1. With respect to regulation, allosterically activated by GTP. Its function is as follows. Catalyzes the conversion of uracil and 5-phospho-alpha-D-ribose 1-diphosphate (PRPP) to UMP and diphosphate. This is Uracil phosphoribosyltransferase from Chromobacterium violaceum (strain ATCC 12472 / DSM 30191 / JCM 1249 / CCUG 213 / NBRC 12614 / NCIMB 9131 / NCTC 9757 / MK).